The sequence spans 352 residues: Probable gamma-glutamyl hydrolase 3 (352 aa).

Residues 1–19 form the signal peptide; that stretch reads MWRFCFFLSLLFFDVSAVK. In terms of domain architecture, Gamma-glutamyl hydrolase spans 49–352; that stretch reads AADPNLNYKP…SGDDEVYIFT (304 aa). Cysteine 166 (nucleophile) is an active-site residue. Histidine 279 is a catalytic residue.

Belongs to the peptidase C26 family.

Its subcellular location is the vacuole. The protein localises to the secreted. It is found in the extracellular space. It localises to the cell wall. It carries out the reaction (6S)-5,6,7,8-tetrahydrofolyl-(gamma-L-Glu)(n) + (n-1) H2O = (6S)-5,6,7,8-tetrahydrofolate + (n-1) L-glutamate. Its function is as follows. Cleaves the polyglutamate sidechains of folate polyglutamates in the vacuole. Is important for polyglutamyl tail length determination before vacuolar exit. Plays a role on folate stability and intracellular folate content. This chain is Probable gamma-glutamyl hydrolase 3 (GGH3), found in Arabidopsis thaliana (Mouse-ear cress).